We begin with the raw amino-acid sequence, 424 residues long: Folate-like transporter 2 (424 aa).

Asparagine 35 carries an N-linked (GlcNAc...) asparagine glycan. 6 helical membrane-spanning segments follow: residues 48 to 68 (IWTYSYLITLIPAFLLTDVFL), 71 to 91 (PLLVFEAFSYFLCWVIFVFGK), 99 to 119 (LEVFYGWATATEIAYFAYIYV), 136 to 156 (ALLVGRFLAYALAQLLIGLNW), 164 to 184 (IISLVAMTIAVFLALILPGVE), and 233 to 253 (PLILKWSVWSALSSCIFYQVT). Asparagine 254 is a glycosylation site (N-linked (GlcNAc...) asparagine). 4 consecutive transmembrane segments (helical) span residues 299-319 (WGDLLLAVGSIGQAGLLFWMS), 324-344 (IVVLYLSYIFYRVIYQLTTTI), 361-381 (LFGINTFVALLLQSILTAVVI), and 392-412 (FVVYSCYHLVVAFGFAIIFGI).

It belongs to the reduced folate carrier (RFC) transporter (TC 2.A.48) family.

It localises to the membrane. In terms of biological role, unlike folt-1, does not appear to act as a folate transporter. This chain is Folate-like transporter 2 (folt-2), found in Caenorhabditis elegans.